Consider the following 279-residue polypeptide: Dermonecrotic toxin StSicTox-betaIB1i (279 aa).

Residue His12 is part of the active site. Positions 32 and 34 each coordinate Mg(2+). His48 acts as the Nucleophile in catalysis. 2 disulfides stabilise this stretch: Cys52-Cys58 and Cys54-Cys198. Asp92 serves as a coordination point for Mg(2+).

This sequence belongs to the arthropod phospholipase D family. Class II subfamily. Class IIb sub-subfamily. It depends on Mg(2+) as a cofactor. In terms of tissue distribution, expressed by the venom gland.

It is found in the secreted. The catalysed reaction is an N-(acyl)-sphingosylphosphocholine = an N-(acyl)-sphingosyl-1,3-cyclic phosphate + choline. It carries out the reaction N-hexanoyl-sphing-4-enine-1-phosphocholine = N-(hexanoyl)-sphing-4-enine-1,3-cyclic phosphate + choline. The enzyme catalyses an N-(acyl)-sphingosylphosphoethanolamine = an N-(acyl)-sphingosyl-1,3-cyclic phosphate + ethanolamine. It catalyses the reaction N-dodecanoyl-heptadecasphing-4-enine-1-phosphoethanolamine = N-dodecanoyl-heptadecasphing-4-enine-1,3-cyclic phosphate + ethanolamine. The catalysed reaction is a 1-acyl-sn-glycero-3-phosphoethanolamine = a 1-acyl-sn-glycero-2,3-cyclic phosphate + ethanolamine. It carries out the reaction 1-tetradecanoyl-sn-glycero-3-phosphoethanolamine = 1-tetradecanoyl-sn-glycero-2,3-cyclic phosphate + ethanolamine. In terms of biological role, dermonecrotic toxins cleave the phosphodiester linkage between the phosphate and headgroup of certain phospholipids (sphingolipid and lysolipid substrates), forming an alcohol (often choline) and a cyclic phosphate. This toxin acts on lysophosphatidylethanolamine (LPE) and ceramide phosphoethanolamine (CPE) with high activity. This toxin acts on sphingomyelin (SM) with very low activity and is not active on lysophosphatidylserine (LPS), lysophosphatidylcholine (LPC) and lysophosphatidylglycerol (LPG). It acts by transphosphatidylation, releasing exclusively cyclic phosphate as second products. It is not surprising that spider toxins have affinity for ethanolamine-containing sphingolipids since they are common in insect prey. Induces dermonecrosis, hemolysis, increased vascular permeability, edema, inflammatory response, and platelet aggregation. The chain is Dermonecrotic toxin StSicTox-betaIB1i from Sicarius terrosus (Cave spider).